Here is a 93-residue protein sequence, read N- to C-terminus: Small ribosomal subunit protein bS20 (93 aa).

The protein belongs to the bacterial ribosomal protein bS20 family.

Its function is as follows. Binds directly to 16S ribosomal RNA. The sequence is that of Small ribosomal subunit protein bS20 from Dictyoglomus turgidum (strain DSM 6724 / Z-1310).